An 806-amino-acid chain; its full sequence is Acetyl-CoA decarbonylase/synthase complex subunit alpha 1 (806 aa).

Residues Cys73, Cys76, Cys77, Cys79, Cys84, and Cys94 each contribute to the [4Fe-4S] cluster site. Residue His117 coordinates CO. Positions 250, 278, and 323 each coordinate [Ni-4Fe-4S] cluster. 4Fe-4S ferredoxin-type domains are found at residues 406–436 (SDEQLKEWVDKCADCGACYLACPIELDIPEA) and 445–475 (FSYLEDLHDACIGCRRCEQVCKKEIPILSVI). [4Fe-4S] cluster is bound by residues Cys417, Cys420, Cys423, Cys427, Cys455, Cys458, Cys461, and Cys465. Cys523, Cys552, and Cys587 together coordinate [Ni-4Fe-4S] cluster.

Belongs to the Ni-containing carbon monoxide dehydrogenase family. As to quaternary structure, heterotetramer of two alpha and two epsilon subunits. The ACDS complex is made up of alpha, epsilon, beta, gamma and delta subunits with a probable stoichiometry of (alpha(2)epsilon(2))(4)-beta(8)-(gamma(1)delta(1))(8). [4Fe-4S] cluster serves as cofactor. [Ni-4Fe-4S] cluster is required as a cofactor.

It carries out the reaction CO + 2 oxidized [2Fe-2S]-[ferredoxin] + H2O = 2 reduced [2Fe-2S]-[ferredoxin] + CO2 + 2 H(+). The protein operates within one-carbon metabolism; methanogenesis from acetate. In terms of biological role, part of the ACDS complex that catalyzes the reversible cleavage of acetyl-CoA, allowing growth on acetate as sole source of carbon and energy. The alpha-epsilon subcomponent functions as a carbon monoxide dehydrogenase. This chain is Acetyl-CoA decarbonylase/synthase complex subunit alpha 1, found in Methanosarcina mazei (strain ATCC BAA-159 / DSM 3647 / Goe1 / Go1 / JCM 11833 / OCM 88) (Methanosarcina frisia).